A 218-amino-acid polypeptide reads, in one-letter code: Adenylate kinase (218 aa).

10–15 provides a ligand contact to ATP; the sequence is GAGKGT. The tract at residues 30 to 59 is NMP; sequence STGDMLRAAVKAGTPLGLEAKAIMDAGGLV. AMP is bound by residues Thr31, Arg36, 57–59, 85–88, and Gln92; these read GLV and GFPR. Positions 122–159 are LID; it reads GRRVHLASGRTYHVTFNPPKAAGKDDVTGEDLVQRDDD. ATP is bound by residues Arg123 and 132-133; that span reads TY. Residues Arg156 and Arg167 each contribute to the AMP site. Residue Arg203 participates in ATP binding.

Belongs to the adenylate kinase family. As to quaternary structure, monomer.

The protein resides in the cytoplasm. The enzyme catalyses AMP + ATP = 2 ADP. It participates in purine metabolism; AMP biosynthesis via salvage pathway; AMP from ADP: step 1/1. Catalyzes the reversible transfer of the terminal phosphate group between ATP and AMP. Plays an important role in cellular energy homeostasis and in adenine nucleotide metabolism. The chain is Adenylate kinase from Chromobacterium violaceum (strain ATCC 12472 / DSM 30191 / JCM 1249 / CCUG 213 / NBRC 12614 / NCIMB 9131 / NCTC 9757 / MK).